A 142-amino-acid chain; its full sequence is Putative pre-16S rRNA nuclease (142 aa).

It belongs to the YqgF nuclease family.

Its subcellular location is the cytoplasm. Could be a nuclease involved in processing of the 5'-end of pre-16S rRNA. This chain is Putative pre-16S rRNA nuclease, found in Shouchella clausii (strain KSM-K16) (Alkalihalobacillus clausii).